The following is a 288-amino-acid chain: Probable ketoamine kinase VV1_2562 (288 aa).

Residue 92–94 (NFL) participates in ATP binding. The active-site Proton acceptor is Asp195.

Belongs to the fructosamine kinase family.

Ketoamine kinase that phosphorylates ketoamines on the third carbon of the sugar moiety to generate ketoamine 3-phosphate. The polypeptide is Probable ketoamine kinase VV1_2562 (Vibrio vulnificus (strain CMCP6)).